Reading from the N-terminus, the 65-residue chain is Large ribosomal subunit protein bL35 (65 aa).

Positions 1 to 16 are enriched in basic residues; it reads MPKQKTHRASAKRFKR. The interval 1–21 is disordered; that stretch reads MPKQKTHRASAKRFKRTGSGG.

It belongs to the bacterial ribosomal protein bL35 family.

The sequence is that of Large ribosomal subunit protein bL35 from Streptococcus pyogenes serotype M18 (strain MGAS8232).